The primary structure comprises 366 residues: Probable methyltransferase-like protein 24 (366 aa).

A signal peptide spans 1–29 (MARERPPGRGCGVLRRCLLGAVLLFGLRL). The interval 36-110 (AGPGSPTRSA…GRPRRKGPRW (75 aa)) is disordered. Residues 44-63 (SAPPGPAWRPPGPHLPPAPG) are compositionally biased toward pro residues. Low complexity predominate over residues 91 to 100 (TPEPGCCAPR).

Belongs to the methyltransferase superfamily.

It is found in the secreted. Its function is as follows. Probable methyltransferase. The protein is Probable methyltransferase-like protein 24 (METTL24) of Homo sapiens (Human).